Reading from the N-terminus, the 1254-residue chain is Histone-lysine N-methyltransferase eggless (1254 aa).

Disordered regions lie at residues Ala24 to Arg209 and Pro228 to Thr248. Basic and acidic residues-rich tracts occupy residues Thr40–Thr57 and Lys65–Glu81. Over residues Ser112–Ser125 the composition is skewed to low complexity. Basic and acidic residues predominate over residues Leu136–Lys162. Over residues Glu172–Asp181 the composition is skewed to polar residues. Basic and acidic residues-rich tracts occupy residues Ser182–Gln197 and Ala234–Lys243. Positions Thr391–Gly416 form a coiled coil. 2 consecutive Tudor domains span residues Arg535–Val607 and Gln634–Gln691. The segment at Ala734–Val760 is disordered. Over residues Ser739–Ala759 the composition is skewed to low complexity. The 67-residue stretch at Leu811 to Arg877 folds into the MBD domain. A Pre-SET domain is found at Val939–Ser1011. Zn(2+) contacts are provided by Cys941, Cys943, Cys947, Cys953, Cys955, Cys993, Cys997, Cys999, and Cys1003. An SET domain is found at Met1014–Asn1229. Residues Arg1024–Trp1026, Asp1062, and Tyr1064 contribute to the S-adenosyl-L-methionine site. Residues Tyr1081–Leu1090 are compositionally biased toward basic and acidic residues. The segment at Tyr1081–Glu1139 is disordered. Acidic residues predominate over residues Asp1091–Asp1106. Residues Ser1123 to Glu1134 are compositionally biased toward low complexity. S-adenosyl-L-methionine contacts are provided by residues Arg1183 and Asn1186–His1187. Zn(2+)-binding residues include Cys1189, Cys1242, Cys1244, and Cys1249. The Post-SET domain maps to Lys1238–Leu1254.

It belongs to the class V-like SAM-binding methyltransferase superfamily. Histone-lysine methyltransferase family. Suvar3-9 subfamily.

The protein resides in the nucleus. The protein localises to the chromosome. The enzyme catalyses L-lysyl(9)-[histone H3] + 3 S-adenosyl-L-methionine = N(6),N(6),N(6)-trimethyl-L-lysyl(9)-[histone H3] + 3 S-adenosyl-L-homocysteine + 3 H(+). Histone methyltransferase that specifically trimethylates 'Lys-9' of histone H3 in ovary. H3 'Lys-9' trimethylation represents a specific tag for epigenetic transcriptional repression by recruiting Su(var)205/HP1 to methylated histones. Plays a central role during oogenesis. The protein is Histone-lysine N-methyltransferase eggless (egg) of Drosophila pseudoobscura pseudoobscura (Fruit fly).